The primary structure comprises 192 residues: Ion-translocating oxidoreductase complex subunit B (192 aa).

Residues 1-26 (MNAIWIAVAAVSLLGLAFGAILGYAS) form a hydrophobic region. In terms of domain architecture, 4Fe-4S spans 32–91 (EDDPVVEKIDEILPQSQCGQCGYPGCRPYAEAISCNGEKINRCAPGGEAVMLKIAELLNV). Positions 49, 52, 57, 74, 117, 120, 123, 127, 147, 150, 153, and 157 each coordinate [4Fe-4S] cluster. 2 4Fe-4S ferredoxin-type domains span residues 108 to 137 (MVAV…GATR) and 138 to 167 (AMHT…LQPV).

It belongs to the 4Fe4S bacterial-type ferredoxin family. RnfB subfamily. As to quaternary structure, the complex is composed of six subunits: RsxA, RsxB, RsxC, RsxD, RsxE and RsxG. [4Fe-4S] cluster serves as cofactor.

It localises to the cell inner membrane. Its function is as follows. Part of a membrane-bound complex that couples electron transfer with translocation of ions across the membrane. Required to maintain the reduced state of SoxR. The polypeptide is Ion-translocating oxidoreductase complex subunit B (Escherichia coli O127:H6 (strain E2348/69 / EPEC)).